Here is a 409-residue protein sequence, read N- to C-terminus: 2,3-bisphosphoglycerate-independent phosphoglycerate mutase (409 aa).

The tract at residues 160 to 179 is disordered; it reads ITDADPKHEGNKPKTVKPLD.

The protein belongs to the BPG-independent phosphoglycerate mutase family. A-PGAM subfamily.

The catalysed reaction is (2R)-2-phosphoglycerate = (2R)-3-phosphoglycerate. The protein operates within carbohydrate degradation; glycolysis; pyruvate from D-glyceraldehyde 3-phosphate: step 3/5. In terms of biological role, catalyzes the interconversion of 2-phosphoglycerate and 3-phosphoglycerate. This chain is 2,3-bisphosphoglycerate-independent phosphoglycerate mutase, found in Methanosphaera stadtmanae (strain ATCC 43021 / DSM 3091 / JCM 11832 / MCB-3).